A 704-amino-acid chain; its full sequence is Polyribonucleotide nucleotidyltransferase (704 aa).

2 residues coordinate Mg(2+): Asp-487 and Asp-493. In terms of domain architecture, KH spans 554-613 (PRLLTIKIHPDKIREVIGKGGSTIQAITKETGTQIDIQDDGTIIIASVNAIAAQAAKSRI). Positions 623 to 691 (GRIYEGKVAK…KQGRIRLSIK (69 aa)) constitute an S1 motif domain.

Belongs to the polyribonucleotide nucleotidyltransferase family. As to quaternary structure, component of the RNA degradosome, which is a multiprotein complex involved in RNA processing and mRNA degradation. It depends on Mg(2+) as a cofactor.

It is found in the cytoplasm. The enzyme catalyses RNA(n+1) + phosphate = RNA(n) + a ribonucleoside 5'-diphosphate. Involved in mRNA degradation. Catalyzes the phosphorolysis of single-stranded polyribonucleotides processively in the 3'- to 5'-direction. The polypeptide is Polyribonucleotide nucleotidyltransferase (Xanthomonas euvesicatoria pv. vesicatoria (strain 85-10) (Xanthomonas campestris pv. vesicatoria)).